The following is a 211-amino-acid chain: FMN-dependent NADH:quinone oxidoreductase 2 (211 aa).

Residues Ser-10 and 17–19 (SRS) contribute to the FMN site.

It belongs to the azoreductase type 1 family. Homodimer. FMN is required as a cofactor.

It catalyses the reaction 2 a quinone + NADH + H(+) = 2 a 1,4-benzosemiquinone + NAD(+). It carries out the reaction N,N-dimethyl-1,4-phenylenediamine + anthranilate + 2 NAD(+) = 2-(4-dimethylaminophenyl)diazenylbenzoate + 2 NADH + 2 H(+). Its function is as follows. Quinone reductase that provides resistance to thiol-specific stress caused by electrophilic quinones. Also exhibits azoreductase activity. Catalyzes the reductive cleavage of the azo bond in aromatic azo compounds to the corresponding amines. This is FMN-dependent NADH:quinone oxidoreductase 2 from Listeria monocytogenes serovar 1/2a (strain ATCC BAA-679 / EGD-e).